A 227-amino-acid chain; its full sequence is 2,3-bisphosphoglycerate-dependent phosphoglycerate mutase (227 aa).

Substrate-binding positions include 8 to 15 (RHGKSVWN), 21 to 22 (TG), R58, 110 to 113 (ERMY), K121, 137 to 138 (RR), and 181 to 182 (GN). Residue H9 is the Tele-phosphohistidine intermediate of the active site. E110 functions as the Proton donor/acceptor in the catalytic mechanism.

It belongs to the phosphoglycerate mutase family. BPG-dependent PGAM subfamily.

It carries out the reaction (2R)-2-phosphoglycerate = (2R)-3-phosphoglycerate. The protein operates within carbohydrate degradation; glycolysis; pyruvate from D-glyceraldehyde 3-phosphate: step 3/5. Catalyzes the interconversion of 2-phosphoglycerate and 3-phosphoglycerate. The sequence is that of 2,3-bisphosphoglycerate-dependent phosphoglycerate mutase from Chlamydia abortus (strain DSM 27085 / S26/3) (Chlamydophila abortus).